The following is a 75-amino-acid chain: Brevinin-2SN2 (75 aa).

Positions 1–22 are cleaved as a signal peptide; the sequence is MFTMKKSLLFLFFLGTISLSFC. The propeptide at 23-40 is removed in mature form; the sequence is EEERGADEDDGGEMTEEE. A disulfide bridge links cysteine 69 with cysteine 75.

Belongs to the frog skin active peptide (FSAP) family. Brevinin subfamily. In terms of tissue distribution, expressed by the skin glands.

The protein localises to the secreted. In terms of biological role, antimicrobial peptide. Active against some Gram-negative and a variety of Gram-positive bacterial strains. Active against fungus C.glabrata 090902 but not against C.albicans ATCC 10231. Shows hemolytic activity against human erythrocytes. The chain is Brevinin-2SN2 from Sylvirana spinulosa (Fine-spined frog).